An 81-amino-acid polypeptide reads, in one-letter code: Cortexin-3 (81 aa).

The helical transmembrane segment at 29–49 (MTFVFVILLFIFLGILIVRCF) threads the bilayer.

Belongs to the cortexin family.

It is found in the membrane. The polypeptide is Cortexin-3 (CTXN3) (Homo sapiens (Human)).